A 441-amino-acid polypeptide reads, in one-letter code: tRNA (guanine(37)-N(1))-methyltransferase (441 aa).

Residues Met1–Ala9 constitute a mitochondrion transit peptide. S-adenosyl-L-methionine-binding positions include Arg221, Asp248–Leu249, Asp276–Gly277, and Asn331.

It belongs to the class I-like SAM-binding methyltransferase superfamily. TRM5/TYW2 family. In terms of assembly, monomer.

Its subcellular location is the mitochondrion matrix. It is found in the nucleus. It localises to the cytoplasm. The enzyme catalyses guanosine(37) in tRNA + S-adenosyl-L-methionine = N(1)-methylguanosine(37) in tRNA + S-adenosyl-L-homocysteine + H(+). In terms of biological role, specifically methylates the N1 position of guanosine-37 in various cytoplasmic and mitochondrial tRNAs. Methylation is not dependent on the nature of the nucleoside 5' of the target nucleoside. This is the first step in the biosynthesis of wybutosine (yW), a modified base adjacent to the anticodon of tRNAs and required for accurate decoding. The chain is tRNA (guanine(37)-N(1))-methyltransferase from Phaeosphaeria nodorum (strain SN15 / ATCC MYA-4574 / FGSC 10173) (Glume blotch fungus).